The sequence spans 878 residues: E3 ubiquitin-protein ligase SH3RF3 (878 aa).

The segment at 19-40 (RGEGEDRQGEQQRGAQARTEED) is disordered. The RING-type zinc finger occupies 52-93 (CSVCLERLDTTAKVLPCQHTFCRRCLESIVCSRHELRCPECR). A disordered region spans residues 120-145 (PRTGASPGSSPPARPGPGTFSALAGG). SH3 domains are found at residues 187–246 (SQLP…CVRP) and 249–312 (QALP…LNDS). Residues 364–433 (RVDSKKNAKK…TVPTQDSSSA (70 aa)) form an interaction with RAC1 region. The residue at position 395 (serine 395) is a Phosphoserine. One can recognise an SH3 3 domain in the interval 458–519 (LPLNVYLALY…PGNYVTPVSR (62 aa)). 2 disordered regions span residues 574 to 659 (QHPA…CPRP) and 688 to 758 (PISG…MGPE). Polar residues-rich tracts occupy residues 590 to 609 (AQPT…THAS), 618 to 633 (ATVS…SRLP), 643 to 653 (ASPQHGQQSPA), and 690 to 699 (SGLSTPSLIN). Residues 703–716 (KPDDKKNEKKEKKS) are compositionally biased toward basic and acidic residues. A compositionally biased stretch (polar residues) spans 741 to 752 (HDPQSAMDTSLQ). The residue at position 792 (serine 792) is a Phosphoserine. The region spanning 819–878 (LPRERYRVVVSYPPQSEAEIELKEGDIVFVHKKHEDGWFKGTLQRNGRTGLFPGSFVESF) is the SH3 4 domain.

The protein belongs to the SH3RF family. As to quaternary structure, interacts (via SH3 domain 3) with PAK2. Interacts with RAC1 (GTP-bound form). Autoubiquitinated.

The catalysed reaction is S-ubiquitinyl-[E2 ubiquitin-conjugating enzyme]-L-cysteine + [acceptor protein]-L-lysine = [E2 ubiquitin-conjugating enzyme]-L-cysteine + N(6)-ubiquitinyl-[acceptor protein]-L-lysine.. It participates in protein modification; protein ubiquitination. Its function is as follows. Has E3 ubiquitin-protein ligase activity. The chain is E3 ubiquitin-protein ligase SH3RF3 (Sh3rf3) from Mus musculus (Mouse).